Here is a 334-residue protein sequence, read N- to C-terminus: Trans-1,2-dihydrobenzene-1,2-diol dehydrogenase (334 aa).

The protein belongs to the Gfo/Idh/MocA family. Homodimer. Kidney.

It carries out the reaction (1R,2R)-1,2-dihydrobenzene-1,2-diol + NADP(+) = catechol + NADPH + H(+). The enzyme catalyses D-xylose + NADP(+) = D-xylono-1,5-lactone + NADPH + H(+). The polypeptide is Trans-1,2-dihydrobenzene-1,2-diol dehydrogenase (DHDH) (Macaca fascicularis (Crab-eating macaque)).